Here is a 286-residue protein sequence, read N- to C-terminus: Polyamine aminopropyltransferase (286 aa).

Positions 9–242 (NGWIDEHHQG…GWWSWTFAAI (234 aa)) constitute a PABS domain. Q36 serves as a coordination point for S-methyl-5'-thioadenosine. The spermidine site is built by H67 and D91. Residues E111 and 143–144 (NG) each bind S-methyl-5'-thioadenosine. Catalysis depends on D162, which acts as the Proton acceptor. P169 serves as a coordination point for S-methyl-5'-thioadenosine.

It belongs to the spermidine/spermine synthase family. As to quaternary structure, homodimer or homotetramer.

The protein localises to the cytoplasm. It carries out the reaction S-adenosyl 3-(methylsulfanyl)propylamine + putrescine = S-methyl-5'-thioadenosine + spermidine + H(+). Its pathway is amine and polyamine biosynthesis; spermidine biosynthesis; spermidine from putrescine: step 1/1. In terms of biological role, catalyzes the irreversible transfer of a propylamine group from the amino donor S-adenosylmethioninamine (decarboxy-AdoMet) to putrescine (1,4-diaminobutane) to yield spermidine. The chain is Polyamine aminopropyltransferase from Prochlorococcus marinus (strain MIT 9313).